A 208-amino-acid chain; its full sequence is Large ribosomal subunit protein uL3 (208 aa).

The interval 124-146 (HGQSRGPMAHGSRYHRRPGSMGP) is disordered.

The protein belongs to the universal ribosomal protein uL3 family. As to quaternary structure, part of the 50S ribosomal subunit. Forms a cluster with proteins L14 and L19.

Its function is as follows. One of the primary rRNA binding proteins, it binds directly near the 3'-end of the 23S rRNA, where it nucleates assembly of the 50S subunit. The protein is Large ribosomal subunit protein uL3 of Streptococcus thermophilus (strain ATCC BAA-491 / LMD-9).